The primary structure comprises 341 residues: Glyceraldehyde-3-phosphate dehydrogenase (341 aa).

NAD(+) is bound by residues 11-12 (TI) and glycine 110. Residue 139–141 (SCN) coordinates D-glyceraldehyde 3-phosphate. The active-site Nucleophile is the cysteine 140. An NAD(+)-binding site is contributed by arginine 168. 194–195 (HG) serves as a coordination point for D-glyceraldehyde 3-phosphate. Glutamine 302 contacts NAD(+).

It belongs to the glyceraldehyde-3-phosphate dehydrogenase family. Homotetramer.

It is found in the cytoplasm. The enzyme catalyses D-glyceraldehyde 3-phosphate + phosphate + NADP(+) = (2R)-3-phospho-glyceroyl phosphate + NADPH + H(+). It catalyses the reaction D-glyceraldehyde 3-phosphate + phosphate + NAD(+) = (2R)-3-phospho-glyceroyl phosphate + NADH + H(+). It participates in carbohydrate degradation; glycolysis; pyruvate from D-glyceraldehyde 3-phosphate: step 1/5. This Methanoculleus marisnigri (strain ATCC 35101 / DSM 1498 / JR1) protein is Glyceraldehyde-3-phosphate dehydrogenase.